We begin with the raw amino-acid sequence, 42 residues long: MRARLCQESALDSFLSMRLDGGGHWGRCRRAPDPLWEEQDIA.

This is an uncharacterized protein from Treponema pallidum (strain Nichols).